The sequence spans 408 residues: RNA exonuclease 4 (408 aa).

Residues threonine 27–methionine 70 are disordered. Residues serine 40–arginine 55 are compositionally biased toward low complexity. One can recognise an Exonuclease domain in the interval glutamine 131–arginine 292. Basic and acidic residues predominate over residues proline 310 to lysine 322. Residues proline 310–alanine 408 are disordered. The segment covering glycine 343–lysine 357 has biased composition (gly residues). Positions glutamine 372–serine 384 are enriched in basic and acidic residues.

Belongs to the REXO4 family.

The protein localises to the nucleus. Its function is as follows. Exoribonuclease involved in ribosome biosynthesis. Involved in the processing of ITS1, the internal transcribed spacer localized between the 18S and 5.8S rRNAs. This chain is RNA exonuclease 4 (REX4), found in Cryptococcus neoformans var. neoformans serotype D (strain B-3501A) (Filobasidiella neoformans).